The following is a 372-amino-acid chain: Chaperone protein DnaJ (372 aa).

The J domain maps to 5–70; that stretch reads DYYDLLEVGR…EKRAGYDRYG (66 aa). The CR-type zinc-finger motif lies at 134–212; sequence GIQAPIHYVT…CGGSGRRRDE (79 aa). Zn(2+)-binding residues include cysteine 147, cysteine 150, cysteine 164, cysteine 167, cysteine 186, cysteine 189, cysteine 200, and cysteine 203. 4 CXXCXGXG motif repeats span residues 147-154, 164-171, 186-193, and 200-207; these read CDTCQGTG, CHTCQGSG, CTTCYGEG, and CKKCGGSG.

It belongs to the DnaJ family. As to quaternary structure, homodimer. Requires Zn(2+) as cofactor.

The protein localises to the cytoplasm. Participates actively in the response to hyperosmotic and heat shock by preventing the aggregation of stress-denatured proteins and by disaggregating proteins, also in an autonomous, DnaK-independent fashion. Unfolded proteins bind initially to DnaJ; upon interaction with the DnaJ-bound protein, DnaK hydrolyzes its bound ATP, resulting in the formation of a stable complex. GrpE releases ADP from DnaK; ATP binding to DnaK triggers the release of the substrate protein, thus completing the reaction cycle. Several rounds of ATP-dependent interactions between DnaJ, DnaK and GrpE are required for fully efficient folding. Also involved, together with DnaK and GrpE, in the DNA replication of plasmids through activation of initiation proteins. This chain is Chaperone protein DnaJ, found in Wolbachia pipientis wMel.